Here is a 523-residue protein sequence, read N- to C-terminus: Cytochrome P450 52A3-B (523 aa).

The chain crosses the membrane as a helical span at residues 17 to 34 (WYTILFGAAFTYFLSIAL). C471 lines the heme pocket.

The protein belongs to the cytochrome P450 family. Requires heme as cofactor.

The protein resides in the membrane. Functionally, together with an NADPH cytochrome P450 the enzyme system catalyzes the terminal hydroxylation as the first step in the assimilation of alkanes and fatty acids. This Candida maltosa (Yeast) protein is Cytochrome P450 52A3-B (CYP52A3-B).